A 178-amino-acid chain; its full sequence is Endothelin-2 (178 aa).

The N-terminal stretch at M1–D24 is a signal peptide. A propeptide spanning residues Q25–L46 is cleaved from the precursor. Intrachain disulfides connect C49–C63 and C51–C59. A propeptide spanning residues V70–R178 is cleaved from the precursor. Positions C96 to H111 are endothelin-like. The interval K154–R178 is disordered. Residues R160 to T170 are compositionally biased toward basic and acidic residues.

Belongs to the endothelin/sarafotoxin family.

It is found in the secreted. Endothelins are endothelium-derived vasoconstrictor peptides. The protein is Endothelin-2 (EDN2) of Oryctolagus cuniculus (Rabbit).